The chain runs to 348 residues: GTPase Obg (348 aa).

An Obg domain is found at 1–159 (MKFLDQARIY…MTLWLRLKLI (159 aa)). An OBG-type G domain is found at 160–327 (ADAGLVGLPN…TLQSLLAAID (168 aa)). GTP contacts are provided by residues 166–173 (GLPNAGKS), 191–195 (FTTLH), 212–215 (DIPG), 279–282 (SKID), and 308–310 (SAA). Mg(2+) contacts are provided by Ser-173 and Thr-193.

Belongs to the TRAFAC class OBG-HflX-like GTPase superfamily. OBG GTPase family. In terms of assembly, monomer. Mg(2+) is required as a cofactor.

It localises to the cytoplasm. Functionally, an essential GTPase which binds GTP, GDP and possibly (p)ppGpp with moderate affinity, with high nucleotide exchange rates and a fairly low GTP hydrolysis rate. Plays a role in control of the cell cycle, stress response, ribosome biogenesis and in those bacteria that undergo differentiation, in morphogenesis control. This is GTPase Obg from Beijerinckia indica subsp. indica (strain ATCC 9039 / DSM 1715 / NCIMB 8712).